Here is a 109-residue protein sequence, read N- to C-terminus: uncharacterized protein (109 aa).

A run of 2 helical transmembrane segments spans residues 18–38 and 48–68; these read TTLA…LLTL and AGLI…VIAL.

It is found in the cell membrane. This is an uncharacterized protein from Mycobacterium tuberculosis (strain CDC 1551 / Oshkosh).